We begin with the raw amino-acid sequence, 275 residues long: Large ribosomal subunit protein uL2 (275 aa).

The disordered stretch occupies residues Glu-236–Ala-263.

This sequence belongs to the universal ribosomal protein uL2 family. In terms of assembly, part of the 50S ribosomal subunit. Forms a bridge to the 30S subunit in the 70S ribosome.

In terms of biological role, one of the primary rRNA binding proteins. Required for association of the 30S and 50S subunits to form the 70S ribosome, for tRNA binding and peptide bond formation. It has been suggested to have peptidyltransferase activity; this is somewhat controversial. Makes several contacts with the 16S rRNA in the 70S ribosome. In Pseudothermotoga lettingae (strain ATCC BAA-301 / DSM 14385 / NBRC 107922 / TMO) (Thermotoga lettingae), this protein is Large ribosomal subunit protein uL2.